Reading from the N-terminus, the 450-residue chain is Cytochrome c1 (450 aa).

The N-terminal stretch at 1–21 (MTLRNASLTAVAALTVALAGG) is a signal peptide. Over residues 24-58 (AQDASTAPGTTAPAGSSYHTNEAAPAAADTAPAAE) the composition is skewed to low complexity. The tract at residues 24–210 (AQDASTAPGT…AAAQEAGDSH (187 aa)) is disordered. Acidic residues-rich tracts occupy residues 59–77 (AADE…EVTE), 85–108 (PAEE…EPAA), and 118–194 (APAE…EDEA). Heme c is bound by residues C245, C248, and H249. The interval 284–305 (PETEEDRPRVPTDHFPTVSGEG) is disordered. M373 is a heme c binding site. A helical membrane pass occupies residues 421–435 (SVIFLIVLAALLYLT).

The main subunits of complex b-c1 are: cytochrome b, cytochrome c1 and the Rieske protein. In terms of processing, binds 1 heme c group covalently per subunit.

The protein resides in the cell membrane. Its function is as follows. Component of the ubiquinol-cytochrome c reductase complex (complex III or cytochrome b-c1 complex), which is a respiratory chain that generates an electrochemical potential coupled to ATP synthesis. c1 functions as an electron donor to cytochrome c. This is Cytochrome c1 (petC) from Paracoccus denitrificans.